We begin with the raw amino-acid sequence, 128 residues long: Large ribosomal subunit protein mL51 (128 aa).

The N-terminal 31 residues, 1–31 (MAGNLLSGAGRRLWDWVPLACRSFSLGVPRL), are a transit peptide targeting the mitochondrion.

It belongs to the mitochondrion-specific ribosomal protein mL51 family. As to quaternary structure, component of the mitochondrial large ribosomal subunit (mt-LSU). Mature mammalian 55S mitochondrial ribosomes consist of a small (28S) and a large (39S) subunit. The 28S small subunit contains a 12S ribosomal RNA (12S mt-rRNA) and 30 different proteins. The 39S large subunit contains a 16S rRNA (16S mt-rRNA), a copy of mitochondrial valine transfer RNA (mt-tRNA(Val)), which plays an integral structural role, and 52 different proteins. Interacts with OXA1L.

The protein localises to the mitochondrion. The sequence is that of Large ribosomal subunit protein mL51 (MRPL51) from Homo sapiens (Human).